The following is a 401-amino-acid chain: Argininosuccinate synthase (401 aa).

Residue 8–16 (AYSGGLDTS) participates in ATP binding. L-citrulline is bound at residue tyrosine 85. ATP is bound at residue glycine 115. L-aspartate-binding residues include threonine 117, asparagine 121, and aspartate 122. Asparagine 121 is a binding site for L-citrulline. Residues arginine 125, serine 173, serine 182, glutamate 258, and tyrosine 270 each coordinate L-citrulline.

Belongs to the argininosuccinate synthase family. Type 1 subfamily. In terms of assembly, homotetramer.

The protein resides in the cytoplasm. The catalysed reaction is L-citrulline + L-aspartate + ATP = 2-(N(omega)-L-arginino)succinate + AMP + diphosphate + H(+). The protein operates within amino-acid biosynthesis; L-arginine biosynthesis; L-arginine from L-ornithine and carbamoyl phosphate: step 2/3. This is Argininosuccinate synthase from Staphylococcus saprophyticus subsp. saprophyticus (strain ATCC 15305 / DSM 20229 / NCIMB 8711 / NCTC 7292 / S-41).